The chain runs to 110 residues: uncharacterized protein (110 aa).

The N-terminal stretch at 1-26 is a signal peptide; sequence MIRNVLLAFMICSGMTLLGGCSSVMS. Residues 87–110 are disordered; it reads RVEKSEANAQATNAVIPPARMPDN.

This sequence to E.coli YceK.

This is an uncharacterized protein from Escherichia coli (strain K12).